The primary structure comprises 260 residues: Large ribosomal subunit protein uL4 (260 aa).

The protein belongs to the universal ribosomal protein uL4 family. In terms of assembly, part of the 50S ribosomal subunit.

Functionally, one of the primary rRNA binding proteins, this protein initially binds near the 5'-end of the 23S rRNA. It is important during the early stages of 50S assembly. It makes multiple contacts with different domains of the 23S rRNA in the assembled 50S subunit and ribosome. In terms of biological role, forms part of the polypeptide exit tunnel. This Methanopyrus kandleri (strain AV19 / DSM 6324 / JCM 9639 / NBRC 100938) protein is Large ribosomal subunit protein uL4.